We begin with the raw amino-acid sequence, 538 residues long: MSSPVIGITFGNTSSSIAYINPKNDVDVIANPDGERAIPSALSYVGEDEYHGGQALQQLIRNPKNTIINFRDFIGLPFDKCDVSKCANGAPAVEVDGKVGFVISRGEGKEEKLTVDEVVSRHLNRLKLAAEDYIGSAVKEAVLTVPTNFSEEQKTALKASAAKIGLQIVQFINEPSAALLAHAEQFPFEKDVNVVVADFGGIRSDAAVIAVRNGIFTILATAHDLSLGGDNLDTELVEYFASEFQKKYQANPRKNARSLAKLKANSSITKKTLSNATSATISIDSLADGFDYHASINRMRYELVANKVFAQFSSFVDSVIAKAELDPLDIDAVLLTGGVSFTPKLTTNLEYTLPESVEILGPQNKNASNNPNELAASGAALQARLISDYDADELAEALQPVIVNTPHLKKPIGLIGAKGEFHPVLLAETSFPVQKKLTLKQAKGDFLIGVYEGDHHIEEKTLEPIPKEENAEEDDESEWSDDEPEVVREKLYTLGTKLMELGIKNANGVEIIFNINKDGALRVTARDLKTGNAVKGEL.

The tract at residues 400-538 (PVIVNTPHLK…KTGNAVKGEL (139 aa)) is peptide-binding domain. The tract at residues 464–484 (PIPKEENAEEDDESEWSDDEP) is disordered. Over residues 470 to 484 (NAEEDDESEWSDDEP) the composition is skewed to acidic residues. Phosphoserine is present on residues Ser477 and Ser480.

This sequence belongs to the heat shock protein 70 family. As to quaternary structure, RAC is a heterodimer of the Hsp70/DnaK-type chaperone SSZ1 and the Hsp40/DnaJ-type chaperone ZUO1. RAC associates with ribosomes via ZUO1.

Its subcellular location is the cytoplasm. Functionally, component of the ribosome-associated complex (RAC), a heterodimeric chaperone complex involved in regulation of accurate translation termination and in folding or maintaining nascent polypeptides in a folding-competent state. RAC stimulates the ATPase activity of the ribosome-associated pool of Hsp70-type chaperones SSB1/SSB2 that bind to the nascent polypeptide chain. SSZ1 is required for ZUO1 to function efficiently as a J-protein for SSB1/SSB2. Also involved in pleiotropic drug resistance by post-translational activation of transcription factor PDR1. This is Ribosome-associated complex subunit SSZ1 (SSZ1) from Saccharomyces cerevisiae (strain ATCC 204508 / S288c) (Baker's yeast).